A 356-amino-acid polypeptide reads, in one-letter code: Nicotinate-nucleotide--dimethylbenzimidazole phosphoribosyltransferase (356 aa).

Glutamate 317 serves as the catalytic Proton acceptor.

This sequence belongs to the CobT family. In terms of assembly, homodimer.

It carries out the reaction 5,6-dimethylbenzimidazole + nicotinate beta-D-ribonucleotide = alpha-ribazole 5'-phosphate + nicotinate + H(+). The protein operates within nucleoside biosynthesis; alpha-ribazole biosynthesis; alpha-ribazole from 5,6-dimethylbenzimidazole: step 1/2. In terms of biological role, catalyzes the synthesis of alpha-ribazole-5'-phosphate from nicotinate mononucleotide (NAMN) and 5,6-dimethylbenzimidazole (DMB). This chain is Nicotinate-nucleotide--dimethylbenzimidazole phosphoribosyltransferase, found in Salmonella paratyphi C (strain RKS4594).